The sequence spans 339 residues: Glyceraldehyde-3-phosphate dehydrogenase (339 aa).

NAD(+)-binding positions include 12-13, D39, R84, and S127; that span reads RI. Residues 157–159, T188, R203, 216–217, and R239 contribute to the D-glyceraldehyde 3-phosphate site; these read SCT and TG. Residue C158 is the Nucleophile of the active site. N320 serves as a coordination point for NAD(+).

This sequence belongs to the glyceraldehyde-3-phosphate dehydrogenase family. In terms of assembly, homotetramer.

The protein resides in the cytoplasm. It catalyses the reaction D-glyceraldehyde 3-phosphate + phosphate + NAD(+) = (2R)-3-phospho-glyceroyl phosphate + NADH + H(+). It functions in the pathway carbohydrate degradation; glycolysis; pyruvate from D-glyceraldehyde 3-phosphate: step 1/5. Functionally, catalyzes the oxidative phosphorylation of glyceraldehyde 3-phosphate (G3P) to 1,3-bisphosphoglycerate (BPG) using the cofactor NAD. The first reaction step involves the formation of a hemiacetal intermediate between G3P and a cysteine residue, and this hemiacetal intermediate is then oxidized to a thioester, with concomitant reduction of NAD to NADH. The reduced NADH is then exchanged with the second NAD, and the thioester is attacked by a nucleophilic inorganic phosphate to produce BPG. This chain is Glyceraldehyde-3-phosphate dehydrogenase (gapA), found in Mycobacterium avium.